Reading from the N-terminus, the 422-residue chain is UPF0761 membrane protein LHK_02978 (422 aa).

6 helical membrane passes run 44–64 (LLSL…FPVF), 102–122 (LTAV…LTID), 141–161 (MLVY…GISG), 178–198 (LAGI…LTVL), 212–232 (ALIG…GFGL), and 246–266 (AFAT…TVLI).

The protein belongs to the UPF0761 family.

The protein localises to the cell inner membrane. The polypeptide is UPF0761 membrane protein LHK_02978 (Laribacter hongkongensis (strain HLHK9)).